The primary structure comprises 135 residues: Allatotropins (135 aa).

A signal peptide spans 1–22 (MNFSMHLVLAVAAAACLCVVTA). The residue at position 51 (F51) is a Phenylalanine amide. A propeptide spanning residues 55–135 (DRPHTRAELY…SSEELLRNVA (81 aa)) is cleaved from the precursor.

Allatotropin: Expressed in corpora cardiaca (CC), corpora allata (CA), antennal lobe (AL) and gnathal ganglion (GNG) (protein level). Expression in AL detected in all animals, expression in GNG detected in most animals and expression in CA and CC detected in few animals (at protein level). Allatotropin-PP-1: Expressed in corpora cardiaca (CC), corpora allata (CA), antennal lobe (AL) and gnathal ganglion (GNG) (at protein level). Expression in AL detected in all animals and expression in GNG, CA and CC detected in some animals (at protein level).

The protein localises to the secreted. Functionally, neuropeptide stimulator of juvenile hormone synthesis. The sequence is that of Allatotropins from Agrotis ipsilon (Black cutworm moth).